Reading from the N-terminus, the 78-residue chain is Small ribosomal subunit protein bS18 (78 aa).

It belongs to the bacterial ribosomal protein bS18 family. Part of the 30S ribosomal subunit. Forms a tight heterodimer with protein bS6.

Its function is as follows. Binds as a heterodimer with protein bS6 to the central domain of the 16S rRNA, where it helps stabilize the platform of the 30S subunit. This chain is Small ribosomal subunit protein bS18, found in Lactobacillus delbrueckii subsp. bulgaricus (strain ATCC BAA-365 / Lb-18).